The sequence spans 568 residues: Urease subunit alpha (568 aa).

The 438-residue stretch at 131 to 568 (GGIDTHIHFI…LPMAQRYFLF (438 aa)) folds into the Urease domain. Positions 136, 138, and 219 each coordinate Ni(2+). Lysine 219 carries the N6-carboxylysine modification. Histidine 221 contributes to the substrate binding site. The Ni(2+) site is built by histidine 248 and histidine 274. Histidine 322 (proton donor) is an active-site residue. Aspartate 362 is a binding site for Ni(2+).

Belongs to the metallo-dependent hydrolases superfamily. Urease alpha subunit family. In terms of assembly, heterotrimer of UreA (gamma), UreB (beta) and UreC (alpha) subunits. Three heterotrimers associate to form the active enzyme. Ni cation serves as cofactor. Carboxylation allows a single lysine to coordinate two nickel ions.

The protein localises to the cytoplasm. The catalysed reaction is urea + 2 H2O + H(+) = hydrogencarbonate + 2 NH4(+). It functions in the pathway nitrogen metabolism; urea degradation; CO(2) and NH(3) from urea (urease route): step 1/1. This is Urease subunit alpha from Nostoc sp. (strain PCC 7120 / SAG 25.82 / UTEX 2576).